The following is a 180-amino-acid chain: Large ribosomal subunit protein uL5 (180 aa).

Belongs to the universal ribosomal protein uL5 family. In terms of assembly, part of the 50S ribosomal subunit; part of the 5S rRNA/L5/L18/L25 subcomplex. Contacts the 5S rRNA and the P site tRNA. Forms a bridge to the 30S subunit in the 70S ribosome.

Functionally, this is one of the proteins that bind and probably mediate the attachment of the 5S RNA into the large ribosomal subunit, where it forms part of the central protuberance. In the 70S ribosome it contacts protein S13 of the 30S subunit (bridge B1b), connecting the 2 subunits; this bridge is implicated in subunit movement. Contacts the P site tRNA; the 5S rRNA and some of its associated proteins might help stabilize positioning of ribosome-bound tRNAs. This chain is Large ribosomal subunit protein uL5, found in Solibacter usitatus (strain Ellin6076).